Consider the following 479-residue polypeptide: GTPase Der (479 aa).

2 consecutive EngA-type G domains span residues 3 to 167 (FTLA…EAAA) and 191 to 366 (LQIA…ATWN). GTP is bound by residues 9–16 (GRPNVGKS), 56–60 (DTAGL), 119–122 (NKAE), 197–204 (GRPNAGKS), 244–248 (DTAGM), and 309–312 (NKWD). Residues 367 to 453 (TRISTARLNQ…RLWMRSQADD (87 aa)) enclose the KH-like domain. Residues 449–479 (SQADDNPYKNRKKSTPSRLNKHVRKGETKKG) form a disordered region. Residues 457–472 (KNRKKSTPSRLNKHVR) are compositionally biased toward basic residues.

This sequence belongs to the TRAFAC class TrmE-Era-EngA-EngB-Septin-like GTPase superfamily. EngA (Der) GTPase family. As to quaternary structure, associates with the 50S ribosomal subunit.

In terms of biological role, GTPase that plays an essential role in the late steps of ribosome biogenesis. This chain is GTPase Der, found in Jannaschia sp. (strain CCS1).